The sequence spans 339 residues: Phenylalanine--tRNA ligase alpha subunit (339 aa).

Residue Glu250 coordinates Mg(2+).

The protein belongs to the class-II aminoacyl-tRNA synthetase family. Phe-tRNA synthetase alpha subunit type 1 subfamily. As to quaternary structure, tetramer of two alpha and two beta subunits. Requires Mg(2+) as cofactor.

It localises to the cytoplasm. It carries out the reaction tRNA(Phe) + L-phenylalanine + ATP = L-phenylalanyl-tRNA(Phe) + AMP + diphosphate + H(+). This is Phenylalanine--tRNA ligase alpha subunit from Flavobacterium psychrophilum (strain ATCC 49511 / DSM 21280 / CIP 103535 / JIP02/86).